The primary structure comprises 658 residues: Protein teflon (658 aa).

Residues 33 to 56 (LYCHFCRDLFTQLPEFLRHLQGAH) form a C2H2-type 1 zinc finger. Disordered stretches follow at residues 78 to 127 (EQDD…SEQK) and 151 to 175 (HINNESKPENGGFNGPCKKASSESN). Basic and acidic residues predominate over residues 100–111 (IPAKSEDSRAID). Residues 118–127 (DNSPVKSEQK) are compositionally biased toward polar residues. A C2H2-type 2; degenerate zinc finger spans residues 608-630 (YFCKCCDDIFTLNEDYTRHLVSQ). Residues 634–657 (YQCTKCIKAFKYRGHFEKHLQNVH) form a C2H2-type 3 zinc finger.

This sequence belongs to the Teflon family.

The protein resides in the nucleus. Its subcellular location is the chromosome. Its function is as follows. Specifically required in males for proper segregation of autosomal bivalents at meiosis I. Expression is required in the male germ line prior to spermatocyte stage S4. May have a role as a bridging molecule maintaining adhesion to hold autosome bivalents together via heterochromatic connections. The sequence is that of Protein teflon from Drosophila erecta (Fruit fly).